A 725-amino-acid chain; its full sequence is Ribosomal RNA large subunit methyltransferase K/L (725 aa).

In terms of domain architecture, THUMP spans 46–157 (VAYRLCLWSR…RGEAVLSLDL (112 aa)).

This sequence belongs to the methyltransferase superfamily. RlmKL family.

The protein resides in the cytoplasm. It carries out the reaction guanosine(2445) in 23S rRNA + S-adenosyl-L-methionine = N(2)-methylguanosine(2445) in 23S rRNA + S-adenosyl-L-homocysteine + H(+). It catalyses the reaction guanosine(2069) in 23S rRNA + S-adenosyl-L-methionine = N(2)-methylguanosine(2069) in 23S rRNA + S-adenosyl-L-homocysteine + H(+). Specifically methylates the guanine in position 2445 (m2G2445) and the guanine in position 2069 (m7G2069) of 23S rRNA. This chain is Ribosomal RNA large subunit methyltransferase K/L, found in Ectopseudomonas mendocina (strain ymp) (Pseudomonas mendocina).